Here is a 355-residue protein sequence, read N- to C-terminus: Protein RecA (355 aa).

Position 65–72 (65–72) interacts with ATP; that stretch reads GPESSGKT.

The protein belongs to the RecA family.

It localises to the cytoplasm. In terms of biological role, can catalyze the hydrolysis of ATP in the presence of single-stranded DNA, the ATP-dependent uptake of single-stranded DNA by duplex DNA, and the ATP-dependent hybridization of homologous single-stranded DNAs. It interacts with LexA causing its activation and leading to its autocatalytic cleavage. This chain is Protein RecA, found in Pseudomonas putida (strain ATCC 47054 / DSM 6125 / CFBP 8728 / NCIMB 11950 / KT2440).